Consider the following 293-residue polypeptide: Nucleotide-binding protein CKR_3143 (293 aa).

8–15 (GLSGAGKT) is a binding site for ATP. 59-62 (DIRG) serves as a coordination point for GTP.

It belongs to the RapZ-like family.

Displays ATPase and GTPase activities. The polypeptide is Nucleotide-binding protein CKR_3143 (Clostridium kluyveri (strain NBRC 12016)).